Consider the following 351-residue polypeptide: MITVVTIPRSVSWKGDAIAVLNQTKLPHSTEYKTLTTIEEVWKSIVMLEVRGAPAIGIVAAFGLALASKKYTTLHIEEFQKKFNRDCNYLGTSRPTAVNLFWAIDRMRESIQEITTIKEAQKILEEEALRIQQEDEAVCRSIGEHALTCFKDGDNILTICNAGSIATARYGTALAPFYIGKEKGVHLHAYACETRPVLQGGRLTTWELKQAGIDVTLITDNTAAHAIQTKEINAIIVGADRIVANGDTANKIGTMNLAILAKYFDIPFYVAAPLSTFDITKQTGAEIVIEERDETEVTKIFGKQVAPVGTTVYNPAFDVTPNELITGIITEQGIIRGDYKREIASLFEKTS.

Residues 51–53, Arg94, and Gln199 each bind substrate; that span reads RGA. Asp240 (proton donor) is an active-site residue. A substrate-binding site is contributed by 250 to 251; the sequence is NK.

This sequence belongs to the EIF-2B alpha/beta/delta subunits family. MtnA subfamily. Homodimer.

The enzyme catalyses 5-(methylsulfanyl)-alpha-D-ribose 1-phosphate = 5-(methylsulfanyl)-D-ribulose 1-phosphate. It functions in the pathway amino-acid biosynthesis; L-methionine biosynthesis via salvage pathway; L-methionine from S-methyl-5-thio-alpha-D-ribose 1-phosphate: step 1/6. Its function is as follows. Catalyzes the interconversion of methylthioribose-1-phosphate (MTR-1-P) into methylthioribulose-1-phosphate (MTRu-1-P). The polypeptide is Methylthioribose-1-phosphate isomerase (Bacillus cereus (strain ZK / E33L)).